The sequence spans 184 residues: ATP-dependent protease subunit HslV (184 aa).

Thr-12 is an active-site residue. Positions 167, 170, and 173 each coordinate Na(+).

This sequence belongs to the peptidase T1B family. HslV subfamily. In terms of assembly, a double ring-shaped homohexamer of HslV is capped on each side by a ring-shaped HslU homohexamer. The assembly of the HslU/HslV complex is dependent on binding of ATP.

It is found in the cytoplasm. It carries out the reaction ATP-dependent cleavage of peptide bonds with broad specificity.. Allosterically activated by HslU binding. Protease subunit of a proteasome-like degradation complex believed to be a general protein degrading machinery. This Wolbachia pipientis subsp. Culex pipiens (strain wPip) protein is ATP-dependent protease subunit HslV.